The following is a 450-amino-acid chain: Zinc finger protein 277 (450 aa).

Alanine 2 is modified (N-acetylalanine). 2 C2H2-type zinc fingers span residues 224–248 (LQCL…KKQH) and 355–381 (HQCR…ETKH).

The protein belongs to the ZNF277 family. In terms of assembly, interacts (via zinc-finger domains) with RPS2/40S ribosomal protein S2, perhaps as nascent RPS2 is synthesized during translation; the interaction is direct; the interaction is extra-ribosomal. Interaction with RPS2 competes with the binding of RPS2 to protein arginine methyltransferase PRMT3. Interacts with Polycomb group (PcG) complex protein BMI1. May be part of a complex including at least ZNF277, BMI1 and RNF2/RING2.

Its subcellular location is the nucleus. In terms of biological role, probable transcription factor. Involved in modulation of cellular senescence; represses transcription of the tumor suppressor gene INK4A/ARF, perhaps acting via the Polycomb group (PcG) complex PRC1. In Homo sapiens (Human), this protein is Zinc finger protein 277 (ZNF277).